The sequence spans 335 residues: 4-hydroxy-3-methylbut-2-enyl diphosphate reductase (335 aa).

Cys21 is a binding site for [4Fe-4S] cluster. Positions 50 and 86 each coordinate (2E)-4-hydroxy-3-methylbut-2-enyl diphosphate. Residues His50 and His86 each coordinate dimethylallyl diphosphate. Isopentenyl diphosphate is bound by residues His50 and His86. Cys108 serves as a coordination point for [4Fe-4S] cluster. A (2E)-4-hydroxy-3-methylbut-2-enyl diphosphate-binding site is contributed by His136. Dimethylallyl diphosphate is bound at residue His136. Position 136 (His136) interacts with isopentenyl diphosphate. Catalysis depends on Glu138, which acts as the Proton donor. Thr177 serves as a coordination point for (2E)-4-hydroxy-3-methylbut-2-enyl diphosphate. Cys207 is a [4Fe-4S] cluster binding site. Residues Ser235, Ser236, Asn237, and Ser280 each coordinate (2E)-4-hydroxy-3-methylbut-2-enyl diphosphate. Positions 235, 236, 237, and 280 each coordinate dimethylallyl diphosphate. Isopentenyl diphosphate-binding residues include Ser235, Ser236, Asn237, and Ser280.

This sequence belongs to the IspH family. Requires [4Fe-4S] cluster as cofactor.

The catalysed reaction is isopentenyl diphosphate + 2 oxidized [2Fe-2S]-[ferredoxin] + H2O = (2E)-4-hydroxy-3-methylbut-2-enyl diphosphate + 2 reduced [2Fe-2S]-[ferredoxin] + 2 H(+). It catalyses the reaction dimethylallyl diphosphate + 2 oxidized [2Fe-2S]-[ferredoxin] + H2O = (2E)-4-hydroxy-3-methylbut-2-enyl diphosphate + 2 reduced [2Fe-2S]-[ferredoxin] + 2 H(+). It functions in the pathway isoprenoid biosynthesis; dimethylallyl diphosphate biosynthesis; dimethylallyl diphosphate from (2E)-4-hydroxy-3-methylbutenyl diphosphate: step 1/1. It participates in isoprenoid biosynthesis; isopentenyl diphosphate biosynthesis via DXP pathway; isopentenyl diphosphate from 1-deoxy-D-xylulose 5-phosphate: step 6/6. Catalyzes the conversion of 1-hydroxy-2-methyl-2-(E)-butenyl 4-diphosphate (HMBPP) into a mixture of isopentenyl diphosphate (IPP) and dimethylallyl diphosphate (DMAPP). Acts in the terminal step of the DOXP/MEP pathway for isoprenoid precursor biosynthesis. The polypeptide is 4-hydroxy-3-methylbut-2-enyl diphosphate reductase (Rhizobium rhizogenes (strain K84 / ATCC BAA-868) (Agrobacterium radiobacter)).